The primary structure comprises 562 residues: MSGTILENLSGRKLSILVGSLLLCQVLCFLLGGLYAPVPAGHTNVLGSLCRENHARQNDTSFFLYSRGEGSCTQVTREEVEQDSMKLANQIVHVFQMPLPRDSRVLDYSRWQQNLIGVLQVEFGYDSSSELREPPKELQLTIDMRLAYRNKGDPDHAWKLYAHGVEHRYLDCVAAHIGSSETLYTCDMIPLFELGALHHSFYLLNLRFPLDTPKQMNLQFGHMHDLTLTAIHQNGGFTHVWLMLKTLLFPFVVGIMVWFWRRVHLLQRSPALLEYMLLYLGGALTFLNLPLEYLSLTIEMPYMLLLSDIRQGIFYAMLLSFWLVFAGEHMLIQDSSNKSTIRSRYWKHLSAVVVGCISLFVFDISERGVQLRNPFYSIWTTPLGAKVAMSFILLAGVSAAVYFLFLCYMISKVFKNIGDKRTSLPSMSQARRLHYEGLIYRFKFLMLATLLCAALTVTGFIMGQMAEGQWKWNDDVEIQLTSAFLTGVYGMWNIYIFALLILYAPSHKQWPTMHHSDETTQSNENIVASAASEEIEFSNLPSDSNPSEISSLTSFTRKVAFE.

The Cytoplasmic portion of the chain corresponds to 1–13 (MSGTILENLSGRK). Residues 14 to 34 (LSILVGSLLLCQVLCFLLGGL) traverse the membrane as a helical segment. Over 35–239 (YAPVPAGHTN…AIHQNGGFTH (205 aa)) the chain is Lumenal. The N-linked (GlcNAc...) asparagine glycan is linked to asparagine 58. A helical transmembrane segment spans residues 240 to 260 (VWLMLKTLLFPFVVGIMVWFW). Topologically, residues 261–270 (RRVHLLQRSP) are cytoplasmic. The chain crosses the membrane as a helical span at residues 271 to 291 (ALLEYMLLYLGGALTFLNLPL). Over 292–311 (EYLSLTIEMPYMLLLSDIRQ) the chain is Lumenal. The helical transmembrane segment at 312 to 332 (GIFYAMLLSFWLVFAGEHMLI) threads the bilayer. Over 333 to 344 (QDSSNKSTIRSR) the chain is Cytoplasmic. Residues 345–365 (YWKHLSAVVVGCISLFVFDIS) traverse the membrane as a helical segment. Topologically, residues 366 to 386 (ERGVQLRNPFYSIWTTPLGAK) are lumenal. Residues 387 to 407 (VAMSFILLAGVSAAVYFLFLC) form a helical membrane-spanning segment. At 408–441 (YMISKVFKNIGDKRTSLPSMSQARRLHYEGLIYR) the chain is on the cytoplasmic side. Residues 442-462 (FKFLMLATLLCAALTVTGFIM) traverse the membrane as a helical segment. Topologically, residues 463–482 (GQMAEGQWKWNDDVEIQLTS) are lumenal. The helical transmembrane segment at 483-503 (AFLTGVYGMWNIYIFALLILY) threads the bilayer. The Cytoplasmic portion of the chain corresponds to 504–562 (APSHKQWPTMHHSDETTQSNENIVASAASEEIEFSNLPSDSNPSEISSLTSFTRKVAFE). The disordered stretch occupies residues 538–562 (SNLPSDSNPSEISSLTSFTRKVAFE). Residues 539-556 (NLPSDSNPSEISSLTSFT) are compositionally biased toward polar residues.

The protein belongs to the wntless family. Interacts with wg; in the Golgi. Interacts with Vps35, a component of the retromer complex; wls stability is regulated by Vps35.

The protein resides in the presynaptic cell membrane. It localises to the postsynaptic cell membrane. The protein localises to the cell membrane. It is found in the endoplasmic reticulum membrane. Its subcellular location is the endosome membrane. The protein resides in the golgi apparatus membrane. A segment polarity gene required for wingless (wg)-dependent patterning processes, acting in both wg-sending cells and wg-target cells. In non-neuronal cells wls directs wg secretion. The wls traffic loop encompasses the Golgi, the cell surface, an endocytic compartment and a retrograde route leading back to the Golgi, and involves clathrin-mediated endocytosis and the retromer complex (a conserved protein complex consisting of Vps35 and Vps26). In neuronal cells (the larval motorneuron NMJ), the wg signal moves across the synapse via the release of wls-containing exosome-like vesicles. Postsynaptic wls is required for the trafficking of fz2 through the fz2-interacting protein Grip. The chain is Protein wntless from Drosophila pseudoobscura pseudoobscura (Fruit fly).